A 400-amino-acid chain; its full sequence is 8-amino-7-oxononanoate synthase (400 aa).

Arginine 21 provides a ligand contact to substrate. Position 112–113 (112–113 (GY)) interacts with pyridoxal 5'-phosphate. Histidine 137 provides a ligand contact to substrate. Pyridoxal 5'-phosphate is bound by residues serine 183, histidine 211, and threonine 239. At lysine 242 the chain carries N6-(pyridoxal phosphate)lysine. Residue threonine 358 coordinates substrate.

This sequence belongs to the class-II pyridoxal-phosphate-dependent aminotransferase family. BioF subfamily. As to quaternary structure, homodimer. Requires pyridoxal 5'-phosphate as cofactor.

It carries out the reaction 6-carboxyhexanoyl-[ACP] + L-alanine + H(+) = (8S)-8-amino-7-oxononanoate + holo-[ACP] + CO2. Its pathway is cofactor biosynthesis; biotin biosynthesis. Its function is as follows. Catalyzes the decarboxylative condensation of pimeloyl-[acyl-carrier protein] and L-alanine to produce 8-amino-7-oxononanoate (AON), [acyl-carrier protein], and carbon dioxide. The chain is 8-amino-7-oxononanoate synthase from Burkholderia lata (strain ATCC 17760 / DSM 23089 / LMG 22485 / NCIMB 9086 / R18194 / 383).